A 350-amino-acid chain; its full sequence is MSNPLSPLLKPAAALYRTVVRMRNLGFEKKLFKTWKAPLPVVSIGNISAGGTGKTPLADWIINYCLSVGSEPALLSRGYGRTTKGVQLVSDGQRILLDSREAGDETSMLAARNPGIIVVVAEKRKEGVEFILKRFGTRMPSLIILDDAFQHRQIARDLDIVIINAAEPYCNARMLPEGRLREPLGNIRRAGLIVLNKITDRNAADAIACDLKKTGIPVVLAKTEAGELVPFGEDAGERNMNGIRAFAFAGIGSPEGFLGSLKEKGIQVEAHRFFRDHEPYSGDKLLPILLEAEKKGLSLVTTEKDYFRLLGEHELTATLSVLPCYYLKISTRFLEGEEILASMLNKVIFS.

Position 48–55 (48–55 (SAGGTGKT)) interacts with ATP.

The protein belongs to the LpxK family.

The enzyme catalyses a lipid A disaccharide + ATP = a lipid IVA + ADP + H(+). Its pathway is glycolipid biosynthesis; lipid IV(A) biosynthesis; lipid IV(A) from (3R)-3-hydroxytetradecanoyl-[acyl-carrier-protein] and UDP-N-acetyl-alpha-D-glucosamine: step 6/6. In terms of biological role, transfers the gamma-phosphate of ATP to the 4'-position of a tetraacyldisaccharide 1-phosphate intermediate (termed DS-1-P) to form tetraacyldisaccharide 1,4'-bis-phosphate (lipid IVA). This Chlorobium limicola (strain DSM 245 / NBRC 103803 / 6330) protein is Tetraacyldisaccharide 4'-kinase.